The chain runs to 376 residues: MEPQILFLYLSLFILSLNFFFTNLKPRLVRLFQPSLESRVKTALLSRKEVAAFLDSPIVEDEEGEEREEEEEGGIVSNANFTFEFDPYMMSKAESVNKALEEAIPVGEPLKIHEAMRYAILAAGKRVRPILCLASCELVGGQENAAMPAACAVEMIHTMSLIKDDLPCMDNDDLRRGKPTTHKVYGEGVAILSGGALLSLAFEHMTTAEISSERMVWAVRELARSIGTRGLVAGQAMDISSEGLDLNEVGLEHLEFIHVHKTAVLLETAAVLGAIIGGGSDEEIESVRKFARCIGLLFQVVDDILDETKSSEELGKTAGKDQLAGKLTYPKLIGLEKSKEFVKRLTKDARQHLQGFSSEKVAPLVALTTFIANRNK.

The signal sequence occupies residues 1 to 24 (MEPQILFLYLSLFILSLNFFFTNL). The isopentenyl diphosphate site is built by lysine 125, arginine 128, and histidine 157. Residues aspartate 164 and aspartate 170 each coordinate Mg(2+). A dimethylallyl diphosphate-binding site is contributed by arginine 175. Arginine 176 provides a ligand contact to isopentenyl diphosphate. Residues lysine 261, threonine 262, glutamine 299, lysine 316, and lysine 326 each coordinate dimethylallyl diphosphate.

This sequence belongs to the FPP/GGPP synthase family. As to quaternary structure, monomer. Part of a heterodimeric geranyl(geranyl)diphosphate synthase. Interacts with GGR. It depends on Mg(2+) as a cofactor. In terms of tissue distribution, mainly expressed in flowers.

It localises to the endoplasmic reticulum. It catalyses the reaction isopentenyl diphosphate + dimethylallyl diphosphate = (2E)-geranyl diphosphate + diphosphate. It carries out the reaction isopentenyl diphosphate + (2E)-geranyl diphosphate = (2E,6E)-farnesyl diphosphate + diphosphate. The enzyme catalyses isopentenyl diphosphate + (2E,6E)-farnesyl diphosphate = (2E,6E,10E)-geranylgeranyl diphosphate + diphosphate. It functions in the pathway isoprenoid biosynthesis; farnesyl diphosphate biosynthesis; farnesyl diphosphate from geranyl diphosphate and isopentenyl diphosphate: step 1/1. The protein operates within isoprenoid biosynthesis; geranyl diphosphate biosynthesis; geranyl diphosphate from dimethylallyl diphosphate and isopentenyl diphosphate: step 1/1. It participates in isoprenoid biosynthesis; geranylgeranyl diphosphate biosynthesis; geranylgeranyl diphosphate from farnesyl diphosphate and isopentenyl diphosphate: step 1/1. Heterodimeric geranyl(geranyl)-diphosphate (GPP) synthase large subunit. In vitro, the large subunit catalyzes mainly the trans-addition of the three molecules of IPP onto DMAPP to form geranylgeranyl pyrophosphate while the small subunit alone is inactive. Upon association of the two subunits, the product profile is not changed. This chain is Heterodimeric geranylgeranyl pyrophosphate synthase large subunit 2 (GGPPS2), found in Arabidopsis thaliana (Mouse-ear cress).